A 148-amino-acid chain; its full sequence is Transcriptional repressor NrdR (148 aa).

A zinc finger spans residues 3–32 (CPKCSSEESKVVDSRQAEDAIRRRRVCESC). Residues 47-137 (LLVIKKDDKR…VYRSFKDVSE (91 aa)) form the ATP-cone domain.

Belongs to the NrdR family. The cofactor is Zn(2+).

In terms of biological role, negatively regulates transcription of bacterial ribonucleotide reductase nrd genes and operons by binding to NrdR-boxes. In Lactococcus lactis subsp. lactis (strain IL1403) (Streptococcus lactis), this protein is Transcriptional repressor NrdR.